We begin with the raw amino-acid sequence, 298 residues long: Apolipoprotein E (298 aa).

Residues 1–18 (MKVLWAALVVTLLAGCQA) form the signal peptide. Repeat copies occupy residues 74-95 (LLME…QELA), 96-117 (PMAE…SRLR), 118-139 (ADME…TMMG), 140-161 (QSGE…KRLL), 162-183 (RDVE…EGAE), and 223-244 (GRLE…EQME). Residues 74–244 (LLMEDTMKEV…RLEEVREQME (171 aa)) are 8 X 22 AA approximate tandem repeats. Residue Met-137 is modified to Methionine sulfoxide. At Ser-141 the chain carries Phosphoserine. The segment at 152 to 162 (HLRKLRKRLLR) is LDL and other lipoprotein receptors binding. Heparin is bound at residue 156–159 (LRKR). The segment at 204–272 (SLPSQPLRER…SWFEPMMEDM (69 aa)) is lipid-binding and lipoprotein association. Residue 218–225 (GEQMRGRL) participates in heparin binding. The specificity for association with VLDL stretch occupies residues 260-272 (RFKSWFEPMMEDM).

This sequence belongs to the apolipoprotein A1/A4/E family. In terms of assembly, homotetramer. May interact with ABCA1; functionally associated with ABCA1 in the biogenesis of HDLs. May interact with APP/A4 amyloid-beta peptide; the interaction is extremely stable in vitro but its physiological significance is unclear. May interact with MAPT. May interact with MAP2. In the cerebrospinal fluid, interacts with secreted SORL1. Interacts with PMEL; this allows the loading of PMEL luminal fragment on ILVs to induce fibril nucleation. APOE exists as multiple glycosylated and sialylated glycoforms within cells and in plasma. The extent of glycosylation and sialylation are tissue and context specific. In terms of processing, glycated in plasma VLDL. Post-translationally, phosphorylated by FAM20C in the extracellular medium.

The protein localises to the secreted. It is found in the extracellular space. It localises to the extracellular matrix. The protein resides in the extracellular vesicle. Its subcellular location is the endosome. The protein localises to the multivesicular body. Its function is as follows. APOE is an apolipoprotein, a protein associating with lipid particles, that mainly functions in lipoprotein-mediated lipid transport between organs via the plasma and interstitial fluids. APOE is a core component of plasma lipoproteins and is involved in their production, conversion and clearance. Apolipoproteins are amphipathic molecules that interact both with lipids of the lipoprotein particle core and the aqueous environment of the plasma. As such, APOE associates with chylomicrons, chylomicron remnants, very low density lipoproteins (VLDL) and intermediate density lipoproteins (IDL) but shows a preferential binding to high-density lipoproteins (HDL). It also binds a wide range of cellular receptors including the LDL receptor/LDLR, the LDL receptor-related proteins LRP1, LRP2 and LRP8 and the very low-density lipoprotein receptor/VLDLR that mediate the cellular uptake of the APOE-containing lipoprotein particles. Finally, APOE also has a heparin-binding activity and binds heparan-sulfate proteoglycans on the surface of cells, a property that supports the capture and the receptor-mediated uptake of APOE-containing lipoproteins by cells. A main function of APOE is to mediate lipoprotein clearance through the uptake of chylomicrons, VLDLs, and HDLs by hepatocytes. APOE is also involved in the biosynthesis by the liver of VLDLs as well as their uptake by peripheral tissues ensuring the delivery of triglycerides and energy storage in muscle, heart and adipose tissues. By participating in the lipoprotein-mediated distribution of lipids among tissues, APOE plays a critical role in plasma and tissues lipid homeostasis. APOE is also involved in two steps of reverse cholesterol transport, the HDLs-mediated transport of cholesterol from peripheral tissues to the liver, and thereby plays an important role in cholesterol homeostasis. First, it is functionally associated with ABCA1 in the biogenesis of HDLs in tissues. Second, it is enriched in circulating HDLs and mediates their uptake by hepatocytes. APOE also plays an important role in lipid transport in the central nervous system, regulating neuron survival and sprouting. This Dasyprocta punctata (Central American agouti) protein is Apolipoprotein E (APOE).